Reading from the N-terminus, the 429-residue chain is Glutamate--tRNA ligase 1 (429 aa).

Positions 6–16 match the 'HIGH' region motif; that stretch reads PSPTGDMHIGN. Positions 235–239 match the 'KMSKS' region motif; it reads KMSKR. Lys238 serves as a coordination point for ATP.

It belongs to the class-I aminoacyl-tRNA synthetase family. Glutamate--tRNA ligase type 1 subfamily. Monomer.

Its subcellular location is the cytoplasm. The enzyme catalyses tRNA(Glu) + L-glutamate + ATP = L-glutamyl-tRNA(Glu) + AMP + diphosphate. Functionally, catalyzes the attachment of glutamate to tRNA(Glu) in a two-step reaction: glutamate is first activated by ATP to form Glu-AMP and then transferred to the acceptor end of tRNA(Glu). In Campylobacter fetus subsp. fetus (strain 82-40), this protein is Glutamate--tRNA ligase 1.